Here is a 299-residue protein sequence, read N- to C-terminus: Large ribosomal subunit protein uL29m (299 aa).

This sequence belongs to the universal ribosomal protein uL29 family. In terms of assembly, component of the mitochondrial large ribosomal subunit. Mature mitochondrial ribosomes consist of a small (37S) and a large (54S) subunit. The 37S subunit contains at least 33 different proteins and 1 molecule of RNA (15S). The 54S subunit contains at least 45 different proteins and 1 molecule of RNA (21S).

It is found in the mitochondrion. The chain is Large ribosomal subunit protein uL29m (MRPL4) from Scheffersomyces stipitis (strain ATCC 58785 / CBS 6054 / NBRC 10063 / NRRL Y-11545) (Yeast).